Reading from the N-terminus, the 578-residue chain is Putative diflavin flavoprotein A 2 (578 aa).

A zinc metallo-hydrolase region spans residues 39 to 233 (QQGTTSNSYL…PPPRLYAPAH (195 aa)). Positions 262–404 (VALFYASAYG…AANEFAQALK (143 aa)) constitute a Flavodoxin-like domain. The tract at residues 429-578 (VNRVVGSLCV…TAIQHRKTSS (150 aa)) is flavodoxin-reductase-like.

It in the N-terminal section; belongs to the zinc metallo-hydrolase group 3 family. In the C-terminal section; belongs to the flavodoxin reductase family. The cofactor is Fe cation.

Its function is as follows. Mediates electron transfer from NADH to oxygen, reducing it to water. This modular protein has 3 redox cofactors, in other organisms the same activity requires 2 or 3 proteins. In Thermosynechococcus vestitus (strain NIES-2133 / IAM M-273 / BP-1), this protein is Putative diflavin flavoprotein A 2 (dfa2).